Reading from the N-terminus, the 119-residue chain is Beta-2-microglobulin (119 aa).

Residues 1–20 form the signal peptide; it reads MARFVAVALLVLLSLSGLEA. The Ig-like C1-type domain maps to 25-114; that stretch reads PKIQVYSRHP…VTFSTPKTVK (90 aa). Cys-45 and Cys-100 are disulfide-bonded.

The protein belongs to the beta-2-microglobulin family. Heterodimer of an alpha chain and a beta chain. Beta-2-microglobulin is the beta-chain of major histocompatibility complex class I molecules.

The protein localises to the secreted. Its function is as follows. Component of the class I major histocompatibility complex (MHC). Involved in the presentation of peptide antigens to the immune system. This chain is Beta-2-microglobulin (B2M), found in Plecturocebus moloch (Dusky titi monkey).